We begin with the raw amino-acid sequence, 214 residues long: Probable nicotinate-nucleotide adenylyltransferase (214 aa).

This sequence belongs to the NadD family.

It catalyses the reaction nicotinate beta-D-ribonucleotide + ATP + H(+) = deamido-NAD(+) + diphosphate. The protein operates within cofactor biosynthesis; NAD(+) biosynthesis; deamido-NAD(+) from nicotinate D-ribonucleotide: step 1/1. In terms of biological role, catalyzes the reversible adenylation of nicotinate mononucleotide (NaMN) to nicotinic acid adenine dinucleotide (NaAD). This chain is Probable nicotinate-nucleotide adenylyltransferase, found in Thermomicrobium roseum (strain ATCC 27502 / DSM 5159 / P-2).